Here is a 734-residue protein sequence, read N- to C-terminus: NAD(P)H-quinone oxidoreductase subunit 5, chloroplastic (734 aa).

16 helical membrane passes run 9 to 29 (WVIP…LFLV), 39 to 59 (IWAF…VHLS), 89 to 109 (IDPL…LVLI), 125 to 145 (FVYI…SNLI), 147 to 167 (IYFF…FWFT), 185 to 205 (GDFG…SLEF), 224 to 244 (LLTI…SAQF), 258 to 278 (TPIS…FLIA), 280 to 300 (LLPL…IGTL), 327 to 347 (LGYM…FHLI), 354 to 374 (ALLF…VGYS), 396 to 416 (TCFL…CFWS), 425 to 445 (WLYS…TAFY), 542 to 562 (LFPL…GIHF), 605 to 625 (SLAI…YSFF), and 714 to 734 (ISSY…FFLS).

It belongs to the complex I subunit 5 family. NDH is composed of at least 16 different subunits, 5 of which are encoded in the nucleus.

Its subcellular location is the plastid. It is found in the chloroplast thylakoid membrane. It catalyses the reaction a plastoquinone + NADH + (n+1) H(+)(in) = a plastoquinol + NAD(+) + n H(+)(out). The enzyme catalyses a plastoquinone + NADPH + (n+1) H(+)(in) = a plastoquinol + NADP(+) + n H(+)(out). In terms of biological role, NDH shuttles electrons from NAD(P)H:plastoquinone, via FMN and iron-sulfur (Fe-S) centers, to quinones in the photosynthetic chain and possibly in a chloroplast respiratory chain. The immediate electron acceptor for the enzyme in this species is believed to be plastoquinone. Couples the redox reaction to proton translocation, and thus conserves the redox energy in a proton gradient. In Oryza nivara (Indian wild rice), this protein is NAD(P)H-quinone oxidoreductase subunit 5, chloroplastic (ndhF).